The primary structure comprises 201 residues: Peptidyl-prolyl cis-trans isomerase FKBP11 (201 aa).

Positions 1 to 27 are cleaved as a signal peptide; the sequence is MTLRPSLLPLHLLLLLLLSAAVCRAEA. Residues 57-144 enclose the PPIase FKBP-type domain; the sequence is GDTLHIHYTG…QYDVELIALI (88 aa). Residues 156–176 traverse the membrane as a helical segment; that stretch reads ILPLVGMAMVPALLGLIGYHL.

It belongs to the FKBP-type PPIase family. As to quaternary structure, interacts with IFITM5.

It localises to the membrane. It carries out the reaction [protein]-peptidylproline (omega=180) = [protein]-peptidylproline (omega=0). Its function is as follows. PPIases accelerate the folding of proteins during protein synthesis. This is Peptidyl-prolyl cis-trans isomerase FKBP11 (FKBP11) from Homo sapiens (Human).